The primary structure comprises 373 residues: UDP-N-acetylglucosamine--N-acetylmuramyl-(pentapeptide) pyrophosphoryl-undecaprenol N-acetylglucosamine transferase (373 aa).

Residues 14–16, asparagine 128, arginine 165, serine 199, and glutamine 295 each bind UDP-N-acetyl-alpha-D-glucosamine; that span reads TAG.

It belongs to the glycosyltransferase 28 family. MurG subfamily.

The protein resides in the cell membrane. It carries out the reaction di-trans,octa-cis-undecaprenyl diphospho-N-acetyl-alpha-D-muramoyl-L-alanyl-D-glutamyl-meso-2,6-diaminopimeloyl-D-alanyl-D-alanine + UDP-N-acetyl-alpha-D-glucosamine = di-trans,octa-cis-undecaprenyl diphospho-[N-acetyl-alpha-D-glucosaminyl-(1-&gt;4)]-N-acetyl-alpha-D-muramoyl-L-alanyl-D-glutamyl-meso-2,6-diaminopimeloyl-D-alanyl-D-alanine + UDP + H(+). Its pathway is cell wall biogenesis; peptidoglycan biosynthesis. Its function is as follows. Cell wall formation. Catalyzes the transfer of a GlcNAc subunit on undecaprenyl-pyrophosphoryl-MurNAc-pentapeptide (lipid intermediate I) to form undecaprenyl-pyrophosphoryl-MurNAc-(pentapeptide)GlcNAc (lipid intermediate II). This is UDP-N-acetylglucosamine--N-acetylmuramyl-(pentapeptide) pyrophosphoryl-undecaprenol N-acetylglucosamine transferase from Mycobacterium sp. (strain KMS).